The primary structure comprises 113 residues: Large ribosomal subunit protein bL17 (113 aa).

The protein belongs to the bacterial ribosomal protein bL17 family. Part of the 50S ribosomal subunit. Contacts protein L32.

This is Large ribosomal subunit protein bL17 from Caldicellulosiruptor bescii (strain ATCC BAA-1888 / DSM 6725 / KCTC 15123 / Z-1320) (Anaerocellum thermophilum).